Consider the following 197-residue polypeptide: LexA repressor (197 aa).

Residues 28–47 (VREIARRFRITPRGAQLHLV) constitute a DNA-binding region (H-T-H motif). Residues S119 and K156 each act as for autocatalytic cleavage activity in the active site.

It belongs to the peptidase S24 family. As to quaternary structure, homodimer.

The catalysed reaction is Hydrolysis of Ala-|-Gly bond in repressor LexA.. Its function is as follows. Represses a number of genes involved in the response to DNA damage (SOS response), including recA and lexA. In the presence of single-stranded DNA, RecA interacts with LexA causing an autocatalytic cleavage which disrupts the DNA-binding part of LexA, leading to derepression of the SOS regulon and eventually DNA repair. This is LexA repressor from Thermotoga neapolitana.